A 285-amino-acid chain; its full sequence is Ribonuclease H1 (285 aa).

The interval 72–126 is disordered; it reads RSSSSPDGSKGQESAHEQKSQAKTSKRPREPLGEGEELPEPGPKHTRQDTEPAAV. Residues 135 to 281 enclose the RNase H type-1 domain; that stretch reads MGESVIVYTD…ADRLAREGAK (147 aa). The Mg(2+) site is built by D144, E185, D209, and D273.

Belongs to the RNase H family. In terms of assembly, monomer. Mg(2+) serves as cofactor.

The protein localises to the cytoplasm. The catalysed reaction is Endonucleolytic cleavage to 5'-phosphomonoester.. In the presence of magnesium, manganese is inhibitory. Endonuclease that specifically degrades the RNA of RNA-DNA hybrids. Plays a role in RNA polymerase II (RNAp II) transcription termination by degrading R-loop RNA-DNA hybrid formation at G-rich pause sites located downstream of the poly(A) site and behind the elongating RNAp II. In Mus musculus (Mouse), this protein is Ribonuclease H1 (Rnaseh1).